Reading from the N-terminus, the 540-residue chain is Glucose-6-phosphate isomerase (540 aa).

Glu346 (proton donor) is an active-site residue. Residues His377 and Lys505 contribute to the active site.

This sequence belongs to the GPI family.

The protein resides in the cytoplasm. The catalysed reaction is alpha-D-glucose 6-phosphate = beta-D-fructose 6-phosphate. Its pathway is carbohydrate biosynthesis; gluconeogenesis. It participates in carbohydrate degradation; glycolysis; D-glyceraldehyde 3-phosphate and glycerone phosphate from D-glucose: step 2/4. In terms of biological role, catalyzes the reversible isomerization of glucose-6-phosphate to fructose-6-phosphate. This Francisella tularensis subsp. mediasiatica (strain FSC147) protein is Glucose-6-phosphate isomerase.